The chain runs to 114 residues: MRFLNNKHREKGLKAEEEACGFLKTLGFEMIERNFFSQFGEIDIIALKKGVLHFIEVKSGENFDPIYAITPSKLKKMIKTIRCYLSQKDPNSDFCIDALIVKNGKFELLENITF.

It belongs to the UPF0102 family.

The protein is UPF0102 protein jhp_0762 of Helicobacter pylori (strain J99 / ATCC 700824) (Campylobacter pylori J99).